The primary structure comprises 651 residues: ATP-dependent RNA helicase MRH4, mitochondrial (651 aa).

The transit peptide at 1–61 (MLRSSLGSVC…SNARQATRRE (61 aa)) directs the protein to the mitochondrion. The segment covering 45–56 (SSLSFSTSNARQ) has biased composition (polar residues). The segment at 45-137 (SSLSFSTSNA…GGKKLGRDGK (93 aa)) is disordered. Composition is skewed to basic and acidic residues over residues 72–83 (RVGRSTARDGDK) and 124–137 (NGRE…RDGK). The short motif at 167-200 (DSFDQFDLLPQVKDAVLNEALKGMLDIKPTPVQR) is the Q motif element. The disordered stretch occupies residues 210–241 (TTGARSRWRTKSKPADSGSEAASPDAPPPPRE). The span at 224-233 (ADSGSEAASP) shows a compositional bias: low complexity. The 212-residue stretch at 234–445 (DAPPPPREEF…ASRFPNMRRI (212 aa)) folds into the Helicase ATP-binding domain. An ATP-binding site is contributed by 247 to 254 (AETGSGKT). The short motif at 392 to 395 (DEAD) is the DEAD box element. A Helicase C-terminal domain is found at 494–651 (PVKGQVDVRR…ESMFMGQALV (158 aa)).

The protein belongs to the DEAD box helicase family. MRH4 subfamily.

Its subcellular location is the mitochondrion. The enzyme catalyses ATP + H2O = ADP + phosphate + H(+). Its function is as follows. ATP-binding RNA helicase involved in mitochondrial RNA metabolism. Required for maintenance of mitochondrial DNA. This Pyricularia oryzae (strain 70-15 / ATCC MYA-4617 / FGSC 8958) (Rice blast fungus) protein is ATP-dependent RNA helicase MRH4, mitochondrial (MRH4).